The sequence spans 139 residues: Protein archease (139 aa).

The Ca(2+) site is built by Asp12, Asp138, and Ile139.

This sequence belongs to the archease family.

In terms of biological role, activates the tRNA-splicing ligase complex by facilitating the enzymatic turnover of catalytic subunit RtcB. Acts by promoting the guanylylation of RtcB, a key intermediate step in tRNA ligation. Can also alter the NTP specificity of RtcB such that ATP, dGTP or ITP is used efficiently. This is Protein archease from Sulfurisphaera tokodaii (strain DSM 16993 / JCM 10545 / NBRC 100140 / 7) (Sulfolobus tokodaii).